Here is a 327-residue protein sequence, read N- to C-terminus: Movement protein (327 aa).

A coiled-coil region spans residues 297–327 (SASSSNTENELARVSQNIDLLKNKLKEICGE).

This sequence belongs to the caulimoviridae movement protein family. In terms of assembly, homotrimer, through the coiled-coil domain. Interacts with VAP. May interact (via N-terminus) with host prenylated Rab acceptor protein 1D (PRA1D).

The protein localises to the host cell junction. Its subcellular location is the host plasmodesma. Transports viral genome to neighboring plant cells directly through plasmosdesmata, without any budding. The movement protein allows efficient cell to cell propagation, by bypassing the host cell wall barrier. Acts by forming tubules structures that increase the size exclusion limit (SEL) of plasmodesmata, thereby allowing viral ribonucleocapsids to spread directly to neighboring cells. This chain is Movement protein, found in Cauliflower mosaic virus (strain CM-1841) (CaMV).